Consider the following 201-residue polypeptide: Large ribosomal subunit protein bL9 (201 aa).

Positions 150 to 165 (EAERQAAGEDLTQRRD) are enriched in basic and acidic residues. The disordered stretch occupies residues 150-201 (EAERQAAGEDLTQRRDDEEEEAVEAAEFFESEELAPGDEEEEAAGEEEDAKE). Acidic residues predominate over residues 166–201 (DEEEEAVEAAEFFESEELAPGDEEEEAAGEEEDAKE).

Belongs to the bacterial ribosomal protein bL9 family.

Binds to the 23S rRNA. The sequence is that of Large ribosomal subunit protein bL9 from Parvibaculum lavamentivorans (strain DS-1 / DSM 13023 / NCIMB 13966).